The chain runs to 227 residues: Lysosomal-associated transmembrane protein 4B (227 aa).

4 helical membrane passes run 26 to 46 (ILLGIWYLIINAVVLLILLSA), 72 to 92 (MCIAIAISLLMILICAMATYG), 100 to 120 (WIIPFFCYQIFDFALNTLVAI), and 153 to 173 (CLVLVILLFIGIILTFKGYLI). The interval 205–222 (PPYDDATAVTGTAKEPPP) is required for NEDD4 interaction.

The protein belongs to the LAPTM4/LAPTM5 transporter family. Homooligomer; upon reaching the lysosomes. Interacts with MCOLN1. Interacts with NEDD4; may play a role in the lysosomal sorting of LAPTM4B; enhances HGS association with NEDD4; mediates inhibition of EGFR degradation. Interacts with PIP5K1C; promotes SNX5 association with LAPTM4B; kinase activity of PIP5K1C is required; interaction is regulated by phosphatidylinositol 4,5-bisphosphate generated by PIP5K1C. Interacts with HGS; promotes HGS ubiquitination. Interacts with SNX5. Interacts with SLC3A2 and SLC7A5; recruits SLC3A2 and SLC7A5 to lysosomes to promote leucine uptake into these organelles and is required for mTORC1 activation. Interacts with LRRC32; decreases TGFB1 production in regulatory T cells. Interacts with BECN1; competes with EGFR for LAPTM4B binding; regulates EGFR activity. Interacts with EGFR; positively correlates with EGFR activation. Post-translationally, undergoes proteolytic cleavage following delivery to the lysosomes. Ubiquitinated by NEDD4.

The protein resides in the endomembrane system. The protein localises to the late endosome membrane. Its subcellular location is the cell membrane. It localises to the cell projection. It is found in the lysosome membrane. The protein resides in the endosome membrane. The protein localises to the endosome. Its subcellular location is the multivesicular body membrane. It localises to the multivesicular body lumen. Required for optimal lysosomal function. Blocks EGF-stimulated EGFR intraluminal sorting and degradation. Conversely by binding with the phosphatidylinositol 4,5-bisphosphate, regulates its PIP5K1C interaction, inhibits HGS ubiquitination and relieves LAPTM4B inhibition of EGFR degradation. Recruits SLC3A2 and SLC7A5 (the Leu transporter) to the lysosome, promoting entry of leucine and other essential amino acid (EAA) into the lysosome, stimulating activation of proton-transporting vacuolar (V)-ATPase protein pump (V-ATPase) and hence mTORC1 activation. Plays a role as negative regulator of TGFB1 production in regulatory T cells. Binds ceramide and facilitates its exit from late endosome in order to control cell death pathways. This is Lysosomal-associated transmembrane protein 4B from Rattus norvegicus (Rat).